The chain runs to 669 residues: MMRLRGSGMLRDLLLRSPAGVSATLRRAQPLVTLCRRPRGGGRPAAGPAAAARLHPWWGGGGWPAEPLARGLSSSPSEILQELGKGSTHPQPGVSPPAAPAAPGPKDGPGETDAFGNSEGKELVASGENKIKQGLLPSLEDLLFYTIAEGQEKIPVHKFITALKSTGLRTSDPRLKECMDMLRLTLQTTSDGVMLDKDLFKKCVQSNIVLLTQAFRRKFVIPDFMSFTSHIDELYESAKKQSGGKVADYIPQLAKFSPDLWGVSVCTVDGQRHSTGDTKVPFCLQSCVKPLKYAIAVNDLGTEYVHRYVGKEPSGLRFNKLFLNEDDKPHNPMVNAGAIVVTSLIKQGVNNAEKFDYVMQFLNKMAGNEYVGFSNATFQSERESGDRNFAIGYYLKEKKCFPEGTDMVGILDFYFQLCSIEVTCESASVMAATLANGGFCPITGERVLSPEAVRNTLSLMHSCGMYDFSGQFAFHVGLPAKSGVAGGILLVVPNVMGMMCWSPPLDKMGNSVKGIHFCHDLVSLCNFHNYDNLRHFAKKLDPRREGGDQRVKSVINLLFAAYTGDVSALRRFALSAMDMEQRDYDSRTALHVAAAEGHVEVVKFLLEACKVNPFPKDRWNNTPMDEALHFGHHDVFKILQEYQVQYTPQGDSDNGKENQTVHKNLDGLL.

Residues 1–54 constitute a mitochondrion transit peptide; that stretch reads MMRLRGSGMLRDLLLRSPAGVSATLRRAQPLVTLCRRPRGGGRPAAGPAAAARL. The segment at 68–118 is disordered; sequence LARGLSSSPSEILQELGKGSTHPQPGVSPPAAPAAPGPKDGPGETDAFGNS. A compositionally biased stretch (pro residues) spans 93–103; the sequence is GVSPPAAPAAP. K130 and K164 each carry N6-succinyllysine. S286 serves as a coordination point for substrate. The residue at position 311 (K311) is an N6-acetyllysine. Residues 315–322 form a highly mobile activation loop region; the sequence is GLRFNKLF. Residues N335, E381, N388, Y414, Y466, and V484 each contribute to the substrate site. ANK repeat units follow at residues 585–614 and 619–648; these read DSRTALHVAAAEGHVEVVKFLLEACKVNPF and WNNTPMDEALHFGHHDVFKILQEYQVQYTP. Residues 647–669 form a disordered region; the sequence is TPQGDSDNGKENQTVHKNLDGLL. S652 carries the phosphoserine modification. A compositionally biased stretch (basic and acidic residues) spans 653 to 669; sequence DNGKENQTVHKNLDGLL.

The protein belongs to the glutaminase family. In terms of assembly, homotetramer, dimer of dimers. The tetramers can assemble into rod-like oligomers (in vitro), but the physiological significance of this is not clear. Interacts with RAF1 and MAP2K2. Interacts with ATCAY; the interaction is direct and may control GLS localization, negatively regulating its activity. Post-translationally, synthesized as a 74-kDa cytosolic precursor which is proteolytically processed by the mitochondrial-processing peptidase (MPP) via a 72-kDa intermediate to yield the mature mitochondrial 68- and 65-kDa subunits. In terms of tissue distribution, isoform 1 and isoform 3 are detected in brain cortex. Isoform 3 is highly expressed in astrocytoma, ganglioglioma and ependymoma. Isoform 1 is highly expressed in brain and kidney, but not detected in liver. Isoform 3 is highly expressed in heart and pancreas, detected at lower levels in placenta, lung, pancreas and kidney, but is not detected in liver. Isoform 2 is expressed in cardiac and skeletal muscle.

The protein localises to the mitochondrion. The protein resides in the cytoplasm. Its subcellular location is the cytosol. It localises to the mitochondrion matrix. The catalysed reaction is L-glutamine + H2O = L-glutamate + NH4(+). With respect to regulation, isoform 1 and isoform 3 are activated by phosphate. Inhibited by BPTES. BPTES binds between subunits and favors dissociation of the tetramer into dimers. Inhibited by 6-diazo-5-oxo-L-norleucine (DON). Enzyme activity is stimulated by phosphorylation. Its function is as follows. Catalyzes the first reaction in the primary pathway for the renal catabolism of glutamine. Plays a role in maintaining acid-base homeostasis. Regulates the levels of the neurotransmitter glutamate, the main excitatory neurotransmitter in the brain. Lacks catalytic activity. This is Glutaminase kidney isoform, mitochondrial (GLS) from Homo sapiens (Human).